The following is a 417-amino-acid chain: Histidine--tRNA ligase (417 aa).

It belongs to the class-II aminoacyl-tRNA synthetase family. As to quaternary structure, homodimer.

It localises to the cytoplasm. The enzyme catalyses tRNA(His) + L-histidine + ATP = L-histidyl-tRNA(His) + AMP + diphosphate + H(+). The protein is Histidine--tRNA ligase of Caldanaerobacter subterraneus subsp. tengcongensis (strain DSM 15242 / JCM 11007 / NBRC 100824 / MB4) (Thermoanaerobacter tengcongensis).